The sequence spans 252 residues: Triosephosphate isomerase (252 aa).

9 to 11 (NWK) lines the substrate pocket. His95 (electrophile) is an active-site residue. The active-site Proton acceptor is the Glu167. Substrate is bound by residues Gly173, Ser213, and 234–235 (GG).

The protein belongs to the triosephosphate isomerase family. As to quaternary structure, homodimer.

The protein localises to the cytoplasm. The enzyme catalyses D-glyceraldehyde 3-phosphate = dihydroxyacetone phosphate. Its pathway is carbohydrate biosynthesis; gluconeogenesis. It functions in the pathway carbohydrate degradation; glycolysis; D-glyceraldehyde 3-phosphate from glycerone phosphate: step 1/1. Involved in the gluconeogenesis. Catalyzes stereospecifically the conversion of dihydroxyacetone phosphate (DHAP) to D-glyceraldehyde-3-phosphate (G3P). This Syntrophotalea carbinolica (strain DSM 2380 / NBRC 103641 / GraBd1) (Pelobacter carbinolicus) protein is Triosephosphate isomerase.